Here is a 109-residue protein sequence, read N- to C-terminus: Co-chaperonin GroES (109 aa).

The protein belongs to the GroES chaperonin family. As to quaternary structure, heptamer of 7 subunits arranged in a ring. Interacts with the chaperonin GroEL.

It localises to the cytoplasm. Functionally, together with the chaperonin GroEL, plays an essential role in assisting protein folding. The GroEL-GroES system forms a nano-cage that allows encapsulation of the non-native substrate proteins and provides a physical environment optimized to promote and accelerate protein folding. GroES binds to the apical surface of the GroEL ring, thereby capping the opening of the GroEL channel. The chain is Co-chaperonin GroES from Methanosarcina acetivorans (strain ATCC 35395 / DSM 2834 / JCM 12185 / C2A).